A 303-amino-acid polypeptide reads, in one-letter code: Dehydrodolichyl diphosphate synthase 1 (303 aa).

Residues 14-34 form a helical membrane-spanning segment; the sequence is LLFLFLIPCLFITSYIGFPVF.

The protein belongs to the UPP synthase family. The cofactor is Mg(2+). As to expression, expressed in low levels in the whole plant. Preferentially expressed in roots.

The protein resides in the endoplasmic reticulum membrane. It carries out the reaction n isopentenyl diphosphate + (2E,6E)-farnesyl diphosphate = a di-trans,poly-cis-polyprenyl diphosphate + n diphosphate. It functions in the pathway protein modification; protein glycosylation. Catalyzes cis-prenyl chain elongation to produce the polyprenyl backbone of dolichol, a glycosyl carrier-lipid required for the biosynthesis of several classes of glycoprotein. The protein is Dehydrodolichyl diphosphate synthase 1 (DPS) of Arabidopsis thaliana (Mouse-ear cress).